Here is a 324-residue protein sequence, read N- to C-terminus: Polyphosphate glucokinase (324 aa).

The interval T53–G79 is disordered. A compositionally biased stretch (polar residues) spans P62–T74. D83–S88 is an ATP binding site.

The protein belongs to the ROK (NagC/XylR) family. In terms of assembly, homodimer.

It catalyses the reaction [phosphate](n) + D-glucose = [phosphate](n-1) + D-glucose 6-phosphate + H(+). The enzyme catalyses D-glucose + ATP = D-glucose 6-phosphate + ADP + H(+). In terms of biological role, catalyzes the phosphorylation of glucose using polyphosphate or ATP as the phosphoryl donor. The sequence is that of Polyphosphate glucokinase (ppgK) from Mycobacterium leprae (strain TN).